Consider the following 146-residue polypeptide: MQFRPSIALVLSIVGILSLEISWTDGCTCFMETRREKCQRSTFGFIGYPYFAGRTNIGGMEYNRFCFFIVRIHKGLSVVFGEPCVYSSVSSAACGTGFYSGSLSIVNGYIESGVKQVNLCGWNERWRSVPSFVKFMFLTQPNWCYA.

The N-terminal stretch at 1-26 is a signal peptide; the sequence is MQFRPSIALVLSIVGILSLEISWTDG.

In terms of tissue distribution, prismatic layer of shell (at protein level). Expressed primarily in the mantle with highest level in the mantle edge and lower level in the mantle pallium.

The protein localises to the secreted. This is an uncharacterized protein from Margaritifera margaritifera (Freshwater pearl mussel).